We begin with the raw amino-acid sequence, 1119 residues long: G8 domain-containing protein DDB_G0288475 (1119 aa).

Positions 1 to 22 (MKYSSFLLLFIYIFFILNNINA) are cleaved as a signal peptide. One can recognise a G8 domain in the interval 276 to 404 (TIWTSGVVPL…YHNTWTKLAA (129 aa)). N-linked (GlcNAc...) asparagine glycans are attached at residues asparagine 308, asparagine 559, asparagine 736, asparagine 854, asparagine 968, asparagine 1035, asparagine 1056, and asparagine 1070.

This sequence belongs to the comF family.

It localises to the secreted. The sequence is that of G8 domain-containing protein DDB_G0288475 from Dictyostelium discoideum (Social amoeba).